Consider the following 189-residue polypeptide: T cell receptor gamma constant 2 (189 aa).

The 95-residue stretch at 10–104 (PKPTIFLPSI…NKNGIDQEII (95 aa)) folds into the Ig-like domain. Residues cysteine 32 and cysteine 88 are joined by a disulfide bond. Asparagine 66, asparagine 120, asparagine 136, asparagine 142, and asparagine 151 each carry an N-linked (GlcNAc...) asparagine glycan. Residues 155–177 (YYTYLLLLLKSVVYFAIITCCLL) traverse the membrane as a helical segment.

Gamma-delta TR is a heterodimer composed of a gamma and delta chain; disulfide-linked. The gamma-delta TR is associated with the transmembrane signaling CD3 coreceptor proteins following the stoichiometry: a single gamma-delta TR heterodimer associates with one CD3D-CD3E heterodimer, one CD3G-CD3E heterodimer and one CD247 homodimer forming a stable octameric structure. Upon activation, gamma-delta TR complex associates with FCER1G to initiate intracellular signaling.

Its subcellular location is the cell membrane. Constant region of T cell receptor (TR) gamma chain that participates in the antigen recognition. Gamma-delta TRs recognize a variety of self and foreign non-peptide antigens frequently expressed at the epithelial boundaries between the host and external environment, including endogenous lipids presented by MH-like protein CD1D and phosphoantigens presented by butyrophilin-like molecule BTN3A1. Upon antigen recognition induces rapid, innate-like immune responses involved in pathogen clearance and tissue repair. Binding of gamma-delta TR complex to antigen triggers phosphorylation of immunoreceptor tyrosine-based activation motifs (ITAMs) in the CD3 chains by the LCK and FYN kinases, allowing the recruitment, phosphorylation, and activation of ZAP70 that facilitates phosphorylation of the scaffolding proteins LCP2 and LAT. This lead to the formation of a supramolecular signalosome that recruits the phospholipase PLCG1, resulting in calcium mobilization and ERK activation, ultimately leading to T cell expansion and differentiation into effector cells. Gamma-delta TRs are produced through somatic rearrangement of a limited repertoire of variable (V), diversity (D), and joining (J) genes. The potential diversity of gamma-delta TRs is conferred by the unique ability to rearrange (D) genes in tandem and to utilize all three reading frames. The combinatorial diversity is considerably increased by the sequence exonuclease trimming and random nucleotide (N) region additions which occur during the V-(D)-J rearrangements. This is T cell receptor gamma constant 2 from Homo sapiens (Human).